The primary structure comprises 181 residues: Cytidylate kinase (181 aa).

ATP is bound at residue 7–15 (GPPGSGTTS).

Belongs to the cytidylate kinase family. Type 2 subfamily.

It is found in the cytoplasm. The catalysed reaction is CMP + ATP = CDP + ADP. The enzyme catalyses dCMP + ATP = dCDP + ADP. The polypeptide is Cytidylate kinase (Methanoculleus marisnigri (strain ATCC 35101 / DSM 1498 / JR1)).